Here is a 402-residue protein sequence, read N- to C-terminus: Lipid-A-disaccharide synthase (402 aa).

The protein belongs to the LpxB family.

The catalysed reaction is a lipid X + a UDP-2-N,3-O-bis[(3R)-3-hydroxyacyl]-alpha-D-glucosamine = a lipid A disaccharide + UDP + H(+). It functions in the pathway bacterial outer membrane biogenesis; LPS lipid A biosynthesis. Its function is as follows. Condensation of UDP-2,3-diacylglucosamine and 2,3-diacylglucosamine-1-phosphate to form lipid A disaccharide, a precursor of lipid A, a phosphorylated glycolipid that anchors the lipopolysaccharide to the outer membrane of the cell. This chain is Lipid-A-disaccharide synthase, found in Cupriavidus pinatubonensis (strain JMP 134 / LMG 1197) (Cupriavidus necator (strain JMP 134)).